The primary structure comprises 507 residues: DNA nucleotidylexotransferase (507 aa).

The short motif at 11 to 17 is the Nuclear localization signal element; sequence PLRKKAK. One can recognise a BRCT domain in the interval 27-124; that stretch reads QHNVKFKEIV…RPVEIQNRHL (98 aa). The interval 254–258 is involved in DNA binding; the sequence is VGLKT. A 2'-deoxyribonucleoside 5'-triphosphate-binding positions include 329–334 and 338–341; these read GFRRGK and HDVD. Mg(2+) contacts are provided by D339, D341, and D431. 446–447 contacts a 2'-deoxyribonucleoside 5'-triphosphate; it reads GW.

It belongs to the DNA polymerase type-X family. Requires Mg(2+) as cofactor. Found in the thymus and not in the spleen, kidney, intestine, or liver.

It is found in the nucleus. The catalysed reaction is DNA(n) + a 2'-deoxyribonucleoside 5'-triphosphate = DNA(n+1) + diphosphate. Functionally, template-independent DNA polymerase which catalyzes the random addition of deoxynucleoside 5'-triphosphate to the 3'-end of a DNA initiator. One of the in vivo functions of this enzyme is the addition of nucleotides at the junction (N region) of rearranged Ig heavy chain and T-cell receptor gene segments during the maturation of B- and T-cells. The chain is DNA nucleotidylexotransferase (dntt) from Xenopus laevis (African clawed frog).